The sequence spans 396 residues: Phosphoglycerate kinase (396 aa).

Residues 21–23, R36, 59–62, R119, and R156 each bind substrate; these read DFN and HLGK. ATP is bound by residues K206, E325, and 352 to 355; that span reads GGDS.

The protein belongs to the phosphoglycerate kinase family. As to quaternary structure, monomer.

The protein localises to the cytoplasm. It catalyses the reaction (2R)-3-phosphoglycerate + ATP = (2R)-3-phospho-glyceroyl phosphate + ADP. It functions in the pathway carbohydrate degradation; glycolysis; pyruvate from D-glyceraldehyde 3-phosphate: step 2/5. The chain is Phosphoglycerate kinase from Macrococcus caseolyticus (strain JCSC5402) (Macrococcoides caseolyticum).